The sequence spans 920 residues: Isoleucine--tRNA ligase (920 aa).

Positions 58-68 (PYANGHLHLGH) match the 'HIGH' region motif. Glutamate 569 lines the L-isoleucyl-5'-AMP pocket. Positions 610-614 (KMSKS) match the 'KMSKS' region motif. Residue lysine 613 coordinates ATP. Residues cysteine 895, cysteine 898, cysteine 910, and cysteine 913 each coordinate Zn(2+).

It belongs to the class-I aminoacyl-tRNA synthetase family. IleS type 1 subfamily. In terms of assembly, monomer. The cofactor is Zn(2+).

The protein localises to the cytoplasm. It catalyses the reaction tRNA(Ile) + L-isoleucine + ATP = L-isoleucyl-tRNA(Ile) + AMP + diphosphate. In terms of biological role, catalyzes the attachment of isoleucine to tRNA(Ile). As IleRS can inadvertently accommodate and process structurally similar amino acids such as valine, to avoid such errors it has two additional distinct tRNA(Ile)-dependent editing activities. One activity is designated as 'pretransfer' editing and involves the hydrolysis of activated Val-AMP. The other activity is designated 'posttransfer' editing and involves deacylation of mischarged Val-tRNA(Ile). This is Isoleucine--tRNA ligase from Helicobacter pylori (strain P12).